Consider the following 241-residue polypeptide: Spiralin (241 aa).

An N-terminal signal peptide occupies residues 1 to 23; that stretch reads MKKLLSILAVFGVSAVGTTSVVA. C24 carries the N-palmitoyl cysteine lipid modification. The S-diacylglycerol cysteine moiety is linked to residue C24.

It belongs to the spiralin family. As to quaternary structure, seems to occur as dimer, tetramers, and large oligomers of identical chains. In terms of processing, palmitate and stearate are the major lipid components.

It is found in the cell membrane. In terms of biological role, major membrane protein of spiroplasma. The protein is Spiralin (spi) of Spiroplasma citri.